We begin with the raw amino-acid sequence, 93 residues long: UPF0473 protein RBAM_024480 (93 aa).

This sequence belongs to the UPF0473 family.

The chain is UPF0473 protein RBAM_024480 from Bacillus velezensis (strain DSM 23117 / BGSC 10A6 / LMG 26770 / FZB42) (Bacillus amyloliquefaciens subsp. plantarum).